We begin with the raw amino-acid sequence, 264 residues long: MLVKTRGVILKEIKFRDQSKICPVFTEHFGKISVILKGVRNPKNKLSGVFSTGNMVELVIYKKQNRDLHLVSDALLLQSPMSARPDMERFTTIYQLIETLKQVTGSEEPHPVLFRFLAATIEELCKPERDYQLVLAWFLIRLVTVLGFEPELEQCVISGEPLIPAAEAMAPDENLYFLFDPGGIAFAGPSALIRSEKRALPALSFRLLRWLSRQNIDALPDIRIPEEHPRRLCELLQDYCAVHIDHNPPVRNRRIISQIRPDNT.

Belongs to the RecO family.

Its function is as follows. Involved in DNA repair and RecF pathway recombination. This chain is DNA repair protein RecO, found in Prosthecochloris aestuarii (strain DSM 271 / SK 413).